A 160-amino-acid chain; its full sequence is Lipoprotein signal peptidase (160 aa).

3 consecutive transmembrane segments (helical) span residues 13–33 (IYIT…RLII), 72–92 (WFLS…ITKL), and 104–124 (SLII…GFVV). Residues aspartate 125 and aspartate 143 contribute to the active site. The helical transmembrane segment at 134–154 (WHFATFNIADCSIFIGIIILM) threads the bilayer.

This sequence belongs to the peptidase A8 family.

It localises to the cell inner membrane. The enzyme catalyses Release of signal peptides from bacterial membrane prolipoproteins. Hydrolyzes -Xaa-Yaa-Zaa-|-(S,diacylglyceryl)Cys-, in which Xaa is hydrophobic (preferably Leu), and Yaa (Ala or Ser) and Zaa (Gly or Ala) have small, neutral side chains.. It participates in protein modification; lipoprotein biosynthesis (signal peptide cleavage). In terms of biological role, this protein specifically catalyzes the removal of signal peptides from prolipoproteins. The polypeptide is Lipoprotein signal peptidase (Buchnera aphidicola subsp. Acyrthosiphon pisum (strain APS) (Acyrthosiphon pisum symbiotic bacterium)).